Reading from the N-terminus, the 150-residue chain is Ribonuclease K6 (150 aa).

An N-terminal signal peptide occupies residues Met-1–Ala-23. Residue His-38 is the Proton acceptor of the active site. Intrachain disulfides connect Cys-46–Cys-104, Cys-60–Cys-114, Cys-78–Cys-129, and Cys-85–Cys-92. Asn-55 is a glycosylation site (N-linked (GlcNAc...) asparagine). Residues Lys-61 to Thr-65 and Lys-86 each bind substrate. Asn-100 is a glycosylation site (N-linked (GlcNAc...) asparagine). Residue Arg-105 coordinates substrate. His-145 (proton donor) is an active-site residue.

This sequence belongs to the pancreatic ribonuclease family. As to quaternary structure, interacts (via N-terminus) with bacterial lipopolysaccharide (LPS).

The protein localises to the secreted. Its subcellular location is the lysosome. It is found in the cytoplasmic granule. Functionally, ribonuclease which shows a preference for the pyrimidines uridine and cytosine. Has potent antibacterial activity against a range of Gram-positive and Gram-negative bacteria, including P.aeruginosa, A.baumanii, M.luteus, S.aureus, E.faecalis, E.faecium, S.saprophyticus and E.coli. Causes loss of bacterial membrane integrity, and also promotes agglutination of Gram-negative bacteria. Probably contributes to urinary tract sterility. Bactericidal activity is independent of RNase activity. The sequence is that of Ribonuclease K6 (RNASE6) from Papio hamadryas (Hamadryas baboon).